The primary structure comprises 244 residues: UPF0246 protein SGO_1307 (244 aa).

The protein belongs to the UPF0246 family.

In Streptococcus gordonii (strain Challis / ATCC 35105 / BCRC 15272 / CH1 / DL1 / V288), this protein is UPF0246 protein SGO_1307.